The following is a 262-amino-acid chain: Small ribosomal subunit protein uS2 (262 aa).

A disordered region spans residues 223–262; it reads KSLLEQDGGEQAAGEEVSQDEKDAVVAEAMSEEDFGEDEE. The segment covering 227 to 238 has biased composition (low complexity); that stretch reads EQDGGEQAAGEE. A compositionally biased stretch (acidic residues) spans 252-262; that stretch reads MSEEDFGEDEE.

It belongs to the universal ribosomal protein uS2 family.

This Campylobacter concisus (strain 13826) protein is Small ribosomal subunit protein uS2.